A 310-amino-acid chain; its full sequence is Bifunctional phosphoglucose/phosphomannose isomerase (310 aa).

An SIS domain is found at 22 to 152 (FDGSFRTGTF…IRPKHEDIEE (131 aa)). D-fructose 6-phosphate contacts are provided by Gly41, Ser42, Ser80, Ser82, Thr85, and Arg128. The active-site Proton acceptor is the Glu202. Residues His218 and Lys306 each contribute to the D-fructose 6-phosphate site. The active-site Proton donor is His218. Catalysis depends on Lys306, which acts as the Proton acceptor.

Belongs to the PGI/PMI family. Homodimer.

The enzyme catalyses alpha-D-glucose 6-phosphate = beta-D-fructose 6-phosphate. The catalysed reaction is D-mannose 6-phosphate = D-fructose 6-phosphate. With respect to regulation, inhibited by low concentrations of erythrose 4-phosphate and 6-phosphogluconate. Its function is as follows. Dual specificity isomerase that catalyzes the isomerization of both glucose-6-phosphate and mannose-6-phosphate to fructose-6-phosphate with similar catalytic efficiency. This Thermoplasma acidophilum (strain ATCC 25905 / DSM 1728 / JCM 9062 / NBRC 15155 / AMRC-C165) protein is Bifunctional phosphoglucose/phosphomannose isomerase.